The chain runs to 183 residues: Ribulose bisphosphate carboxylase small subunit, chloroplastic (183 aa).

The N-terminal 59 residues, 1 to 59, are a transit peptide targeting the chloroplast; the sequence is MASSMISSGTVATVSADRPAPAQARMVAPFTGLKSSSASPVTRKSNDITSIASNGGRVQ.

It belongs to the RuBisCO small chain family. In terms of assembly, heterohexadecamer of 8 large and 8 small subunits.

The protein localises to the plastid. It localises to the chloroplast. RuBisCO catalyzes two reactions: the carboxylation of D-ribulose 1,5-bisphosphate, the primary event in carbon dioxide fixation, as well as the oxidative fragmentation of the pentose substrate. Both reactions occur simultaneously and in competition at the same active site. Although the small subunit is not catalytic it is essential for maximal activity. This Malus sp. (Crab apple) protein is Ribulose bisphosphate carboxylase small subunit, chloroplastic.